Here is a 139-residue protein sequence, read N- to C-terminus: MSSYALYRGTTLGQALDKTLEDMESEGLLTKSLASKVLQQFDKSMNKQISRLPKEKMNFCATQLLTYRYCDNVWTFILNNVTLKDPQRSFDEPIDKLKVVACDGRQTSLLQTLSAQGPSKRVNRAHAAAAGDDEDDDSD.

The segment at 113–139 (LSAQGPSKRVNRAHAAAAGDDEDDDSD) is disordered.

This sequence belongs to the TFIIA subunit 2 family.

The protein resides in the nucleus. This is Transcription initiation factor IIA small chain homolog from Caenorhabditis elegans.